We begin with the raw amino-acid sequence, 359 residues long: Medium-wave-sensitive opsin 1 (359 aa).

Residues 1-47 (MAQQLTGEQTLDHYEDSTQASIFTYTNSNSTRGPFEGPNYHIAPRWV) lie on the Extracellular side of the membrane. Residues 12–38 (DHYEDSTQASIFTYTNSNSTRGPFEGP) form a required for 11-cis-retinal regeneration region. N-linked (GlcNAc...) asparagine glycosylation is present at Asn-29. Residues 48–72 (YHLTSTWMILVVIASVFTNGLVLAA) traverse the membrane as a helical segment. At 73 to 84 (TMRFKKLRHPLN) the chain is on the cytoplasmic side. A helical membrane pass occupies residues 85-110 (WILVNLAVADLAETIIASTISVVNQI). Residues 111-124 (YGYFVLGHPLCVIE) lie on the Extracellular side of the membrane. An intrachain disulfide couples Cys-121 to Cys-198. The helical transmembrane segment at 125-144 (GYIVSLCGITGLWSLAIISW) threads the bilayer. Topologically, residues 145–163 (ERWLVVCKPFGNVRFDAKL) are cytoplasmic. A helical transmembrane segment spans residues 164–187 (ATVGIVFSWVWAAVWTAPPIFGWS). Over 188-213 (RYWPYGLKTSCGPDVFSGTSYPGVQS) the chain is Extracellular. The chain crosses the membrane as a helical span at residues 214 to 241 (YMMVLMVTCCIFPLSIIVLCYLQVWLAI). Over 242 to 263 (RAVAKQQKESESTQKAEKEVTR) the chain is Cytoplasmic. A helical transmembrane segment spans residues 264–287 (MVVVMVFAYCLCWGPYTFFACFAT). Residues 288–295 (AHPGYAFH) are Extracellular-facing. A helical membrane pass occupies residues 296-320 (PLVASLPSYFAKSATIYNPIIYVFM). Lys-307 carries the N6-(retinylidene)lysine modification. Residues 321 to 359 (NRQFRNCILQLFGKKVDDSSELSSTSKTEVSSVSSVSPA) lie on the Cytoplasmic side of the membrane.

It belongs to the G-protein coupled receptor 1 family. Opsin subfamily. In terms of assembly, monomer. Homodimer. Homotetramer. O-glycosylated. In terms of processing, phosphorylated on some or all of the serine and threonine residues present in the C-terminal region. Expressed in cone photoreceptor cells.

It localises to the membrane. Its function is as follows. Visual pigments are the light-absorbing molecules that mediate vision. They consist of an apoprotein, opsin, covalently linked to cis-retinal. May increase spectral sensitivity in dim light. This Rattus norvegicus (Rat) protein is Medium-wave-sensitive opsin 1 (Opn1mw).